The chain runs to 815 residues: Protein-glutamine gamma-glutamyltransferase K (815 aa).

A compositionally biased stretch (basic and acidic residues) spans 1-10 (MEGPRSDVGR). Disordered regions lie at residues 1–48 (MEGP…SFWA) and 62–101 (DDWGPEPSGSRSRGTSSRGRDSRGGRRPESRGSGVNAAGD). A compositionally biased stretch (pro residues) spans 16-25 (WQPPTTPSPE). Threonine 21 bears the Phosphothreonine mark. 5 positions are modified to phosphoserine: serine 23, serine 71, serine 83, serine 91, and serine 94. The segment covering 66–78 (PEPSGSRSRGTSS) has biased composition (low complexity). The segment covering 79-91 (RGRDSRGGRRPES) has biased composition (basic and acidic residues). Residues cysteine 376, histidine 435, and aspartate 458 contribute to the active site. 4 residues coordinate Ca(2+): asparagine 498, aspartate 500, glutamate 547, and glutamate 552. Residues 791–815 (GSGFSDAGGDSRSGENIPMAYRGGA) form a disordered region. Serine 803 is subject to Phosphoserine.

The protein belongs to the transglutaminase superfamily. Transglutaminase family. Interacts with PLAAT4. It depends on Ca(2+) as a cofactor. Post-translationally, tyrosine-phosphorylated. Palmitoylated. In terms of processing, the membrane anchorage region possesses a cluster of five cysteines within which fatty acid(s) may become thioester-linked. It is subject to phorbol ester-stimulated phosphorylation and is hypersensitive to proteolysis, which releases the enzyme in a soluble form. In terms of tissue distribution, expressed in large amounts in epithelial tissues (lung, liver and kidney).

It localises to the membrane. It catalyses the reaction L-glutaminyl-[protein] + L-lysyl-[protein] = [protein]-L-lysyl-N(6)-5-L-glutamyl-[protein] + NH4(+). Catalyzes the cross-linking of proteins and the conjugation of polyamines to proteins. Responsible for cross-linking epidermal proteins during formation of the stratum corneum. Involved in cell proliferation. The polypeptide is Protein-glutamine gamma-glutamyltransferase K (Tgm1) (Mus musculus (Mouse)).